A 209-amino-acid polypeptide reads, in one-letter code: Thiamine-phosphate synthase (209 aa).

4-amino-2-methyl-5-(diphosphooxymethyl)pyrimidine contacts are provided by residues 37–41 (QYRDK) and N69. Residues D70 and D89 each coordinate Mg(2+). S108 contributes to the 4-amino-2-methyl-5-(diphosphooxymethyl)pyrimidine binding site. Position 135-137 (135-137 (SPT)) interacts with 2-[(2R,5Z)-2-carboxy-4-methylthiazol-5(2H)-ylidene]ethyl phosphate. K138 is a binding site for 4-amino-2-methyl-5-(diphosphooxymethyl)pyrimidine. 2-[(2R,5Z)-2-carboxy-4-methylthiazol-5(2H)-ylidene]ethyl phosphate-binding positions include G165 and 185–186 (VS).

Belongs to the thiamine-phosphate synthase family. Requires Mg(2+) as cofactor.

It catalyses the reaction 2-[(2R,5Z)-2-carboxy-4-methylthiazol-5(2H)-ylidene]ethyl phosphate + 4-amino-2-methyl-5-(diphosphooxymethyl)pyrimidine + 2 H(+) = thiamine phosphate + CO2 + diphosphate. The catalysed reaction is 2-(2-carboxy-4-methylthiazol-5-yl)ethyl phosphate + 4-amino-2-methyl-5-(diphosphooxymethyl)pyrimidine + 2 H(+) = thiamine phosphate + CO2 + diphosphate. It carries out the reaction 4-methyl-5-(2-phosphooxyethyl)-thiazole + 4-amino-2-methyl-5-(diphosphooxymethyl)pyrimidine + H(+) = thiamine phosphate + diphosphate. The protein operates within cofactor biosynthesis; thiamine diphosphate biosynthesis; thiamine phosphate from 4-amino-2-methyl-5-diphosphomethylpyrimidine and 4-methyl-5-(2-phosphoethyl)-thiazole: step 1/1. In terms of biological role, condenses 4-methyl-5-(beta-hydroxyethyl)thiazole monophosphate (THZ-P) and 2-methyl-4-amino-5-hydroxymethyl pyrimidine pyrophosphate (HMP-PP) to form thiamine monophosphate (TMP). In Halorhodospira halophila (strain DSM 244 / SL1) (Ectothiorhodospira halophila (strain DSM 244 / SL1)), this protein is Thiamine-phosphate synthase.